Consider the following 78-residue polypeptide: MANVKFQVKKGDLVKIIAGDDKGKTGKILSVLAKKSQVIVEGCKVAKKAIKPSEKIPNGGHINKEMPIHISNVAKVEE.

This sequence belongs to the universal ribosomal protein uL24 family. In terms of assembly, part of the 50S ribosomal subunit.

Its function is as follows. One of two assembly initiator proteins, it binds directly to the 5'-end of the 23S rRNA, where it nucleates assembly of the 50S subunit. One of the proteins that surrounds the polypeptide exit tunnel on the outside of the subunit. The polypeptide is Large ribosomal subunit protein uL24 (Campylobacter curvus (strain 525.92)).